Reading from the N-terminus, the 474-residue chain is Ribosomal protein uS12 methylthiotransferase RimO (474 aa).

The 111-residue stretch at 37–147 (NRIGFVSLGC…VLNHVHKYVP (111 aa)) folds into the MTTase N-terminal domain. 6 residues coordinate [4Fe-4S] cluster: Cys46, Cys82, Cys111, Cys179, Cys183, and Cys186. The Radical SAM core domain maps to 165–402 (LTPKHYAYLK…MEVQAEISAE (238 aa)). A TRAM domain is found at 405 to 471 (ARLVGRELDI…EHDLWAELVA (67 aa)).

The protein belongs to the methylthiotransferase family. RimO subfamily. [4Fe-4S] cluster is required as a cofactor.

Its subcellular location is the cytoplasm. It catalyses the reaction L-aspartate(89)-[ribosomal protein uS12]-hydrogen + (sulfur carrier)-SH + AH2 + 2 S-adenosyl-L-methionine = 3-methylsulfanyl-L-aspartate(89)-[ribosomal protein uS12]-hydrogen + (sulfur carrier)-H + 5'-deoxyadenosine + L-methionine + A + S-adenosyl-L-homocysteine + 2 H(+). In terms of biological role, catalyzes the methylthiolation of an aspartic acid residue of ribosomal protein uS12. This Shewanella amazonensis (strain ATCC BAA-1098 / SB2B) protein is Ribosomal protein uS12 methylthiotransferase RimO.